The following is a 704-amino-acid chain: Elongation factor G (704 aa).

The tr-type G domain occupies 8 to 290 (ARYRNIGISA…AVVDYLPSPV (283 aa)). GTP is bound by residues 17 to 24 (AHIDAGKT), 88 to 92 (DTPGH), and 142 to 145 (NKMD).

The protein belongs to the TRAFAC class translation factor GTPase superfamily. Classic translation factor GTPase family. EF-G/EF-2 subfamily.

Its subcellular location is the cytoplasm. Functionally, catalyzes the GTP-dependent ribosomal translocation step during translation elongation. During this step, the ribosome changes from the pre-translocational (PRE) to the post-translocational (POST) state as the newly formed A-site-bound peptidyl-tRNA and P-site-bound deacylated tRNA move to the P and E sites, respectively. Catalyzes the coordinated movement of the two tRNA molecules, the mRNA and conformational changes in the ribosome. This Pectobacterium carotovorum subsp. carotovorum (strain PC1) protein is Elongation factor G.